The chain runs to 279 residues: Phosphatidylglycerol--prolipoprotein diacylglyceryl transferase (279 aa).

Transmembrane regions (helical) follow at residues 18-38 (LSVR…YFVA), 55-75 (IIFY…VIFQ), and 89-109 (IWHG…AGVI). Arg137 provides a ligand contact to a 1,2-diacyl-sn-glycero-3-phospho-(1'-sn-glycerol). The next 2 membrane-spanning stretches (helical) occupy residues 203–223 (LGET…FIEG) and 235–255 (IRVA…LIVY).

This sequence belongs to the Lgt family.

Its subcellular location is the cell membrane. The catalysed reaction is L-cysteinyl-[prolipoprotein] + a 1,2-diacyl-sn-glycero-3-phospho-(1'-sn-glycerol) = an S-1,2-diacyl-sn-glyceryl-L-cysteinyl-[prolipoprotein] + sn-glycerol 1-phosphate + H(+). It functions in the pathway protein modification; lipoprotein biosynthesis (diacylglyceryl transfer). Catalyzes the transfer of the diacylglyceryl group from phosphatidylglycerol to the sulfhydryl group of the N-terminal cysteine of a prolipoprotein, the first step in the formation of mature lipoproteins. This Staphylococcus aureus (strain Mu3 / ATCC 700698) protein is Phosphatidylglycerol--prolipoprotein diacylglyceryl transferase.